We begin with the raw amino-acid sequence, 595 residues long: Methionine--tRNA ligase (595 aa).

The 'HIGH' region signature appears at 11-21 (PYANGPRHIGH). Zn(2+) contacts are provided by C143, C146, C156, and C159. A 'KMSKS' region motif is present at residues 350 to 354 (KFSSS). ATP is bound at residue S353.

The protein belongs to the class-I aminoacyl-tRNA synthetase family. MetG type 1 subfamily. As to quaternary structure, monomer. Zn(2+) is required as a cofactor.

It localises to the cytoplasm. The catalysed reaction is tRNA(Met) + L-methionine + ATP = L-methionyl-tRNA(Met) + AMP + diphosphate. Functionally, is required not only for elongation of protein synthesis but also for the initiation of all mRNA translation through initiator tRNA(fMet) aminoacylation. The protein is Methionine--tRNA ligase of Nocardioides sp. (strain ATCC BAA-499 / JS614).